The following is a 267-amino-acid chain: Hydroxynaphthalene reductase-like protein Arp2 (267 aa).

Residues isoleucine 25, asparagine 45, aspartate 71, and asparagine 98 each contribute to the NADP(+) site. Active-site proton donor residues include serine 147 and serine 148. NADP(+)-binding residues include tyrosine 162, lysine 166, valine 195, and threonine 197. The Proton acceptor role is filled by tyrosine 162. Lysine 166 serves as the catalytic Lowers pKa of active site Tyr.

The protein belongs to the short-chain dehydrogenases/reductases (SDR) family.

Functionally, hydroxynaphthalene reductase-like protein; part of the Pks2 gene cluster that mediates the formation of infectious structures (appressoria), enabling these fungi to kill insects faster. The product of the Pks2 gene cluster is different from the one of Pks1 and has still not been identified. The sequence is that of Hydroxynaphthalene reductase-like protein Arp2 from Metarhizium acridum (strain CQMa 102).